Reading from the N-terminus, the 135-residue chain is Small ribosomal subunit protein uS8 (135 aa).

It belongs to the universal ribosomal protein uS8 family. As to quaternary structure, part of the 30S ribosomal subunit. Contacts proteins S5 and S12.

One of the primary rRNA binding proteins, it binds directly to 16S rRNA central domain where it helps coordinate assembly of the platform of the 30S subunit. The sequence is that of Small ribosomal subunit protein uS8 from Corynebacterium urealyticum (strain ATCC 43042 / DSM 7109).